A 1111-amino-acid polypeptide reads, in one-letter code: Protein STU1 (1111 aa).

2 HEAT repeats span residues 95–133 (ALPL…ERSV) and 167–205 (YVPT…KSDL). Disordered regions lie at residues 225–245 (ELNP…VEPS) and 476–751 (RLLQ…VDEE). Residues 502-511 (SKSTMGTSKP) are compositionally biased toward polar residues. Residues 704–714 (PREEQRFVKPV) are compositionally biased toward basic and acidic residues.

The protein belongs to the CLASP family. Interacts with microtubules.

The protein resides in the cytoplasm. It localises to the cytoskeleton. The protein localises to the nucleus. It is found in the spindle. In terms of biological role, microtubule binding protein that promotes the stabilization of dynamic microtubules. Required for mitotic spindle formation. The polypeptide is Protein STU1 (STU1) (Chaetomium globosum (strain ATCC 6205 / CBS 148.51 / DSM 1962 / NBRC 6347 / NRRL 1970) (Soil fungus)).